Here is a 307-residue protein sequence, read N- to C-terminus: 4-hydroxy-tetrahydrodipicolinate synthase (307 aa).

Residue Thr-49 coordinates pyruvate. Residue Tyr-138 is the Proton donor/acceptor of the active site. Lys-166 functions as the Schiff-base intermediate with substrate in the catalytic mechanism. Ile-207 is a binding site for pyruvate.

This sequence belongs to the DapA family. In terms of assembly, homotetramer; dimer of dimers.

Its subcellular location is the cytoplasm. The catalysed reaction is L-aspartate 4-semialdehyde + pyruvate = (2S,4S)-4-hydroxy-2,3,4,5-tetrahydrodipicolinate + H2O + H(+). The protein operates within amino-acid biosynthesis; L-lysine biosynthesis via DAP pathway; (S)-tetrahydrodipicolinate from L-aspartate: step 3/4. Catalyzes the condensation of (S)-aspartate-beta-semialdehyde [(S)-ASA] and pyruvate to 4-hydroxy-tetrahydrodipicolinate (HTPA). The protein is 4-hydroxy-tetrahydrodipicolinate synthase of Limosilactobacillus reuteri (strain DSM 20016) (Lactobacillus reuteri).